Consider the following 867-residue polypeptide: MVAAAAADALAAGGDSSSPSDLYNKITGQQSSTTTSLSYAACDVITRHLISMLLEISNWTNDLAKYLAGSEQSSDDGHNERCLLFSSIFFAIDPSLALAQMSSVASKHALLIALGGFSIAALFVWYINKKDKDGRKKKKVGDVISNGLPKTATASDVQTENGNVKKANGHVNGDVQSSIGVSQKQQQKDEDEKTQKKDAVQNEKPSIDKKQPKSQAPTEKKEEKTVEIHTETEETDHVAAGDSGVVSEHKEHDKKTKQKNDEPVSIDKKSEEIEVPKQAGVVNEEPKKQSEETVVEEQFVKKEEPKLKSAPTPLLTMPSKKKVLENEQIPEEPTPTKMNDATSPLSLDIAAQMSPASFSWSEEMEKSFNEEEFRLNESSDIDRSPASPLRHLQQQHNKNRSSQKRKGGRVNGRDGVHQPQQQHQQQKKEEQGQIKKGQRRLTKEKSVEETPEKSQKRVVLKHHENEAGDAAHAQIIESPHHENASYEKSDSPGLDSQNSEASSQDSGRATGPLASPHEDGLTTEDDFLPMYEFEIPNSLVGLIIGVKGKTIKELSVRTNVRMLIRQHHETDKVKTHQICQVRGKRDEINHCLQMLRRRFPPARFPELNLQPVVPPVLPNSNFDMLSTQPTWLTLPEDIKCEVAVSSIISASHFFIQQPTHPSFASLRHLDMYMGSLYGEQSNLPELPIPCQNGLLCAAPVGNAWFRAVTVQYFDETDEVFVKFVDYGGYSKMARQDLRQIRTDLMSLPFQSTEVMLAHVRPVDGTTNWSDAAMQKFRAMCIGKVINCKMVGQSHDTRIPMVELYMMSKDGKDAQEVRFDQVLMNCGLARTADPSKMSRITVPAALDTESRMKRPSFSSQTSQTAVVC.

The chain crosses the membrane as a helical span at residues 108–128 (HALLIALGGFSIAALFVWYIN). Disordered stretches follow at residues 145–458 (SNGL…QKRV) and 481–523 (HENA…GLTT). Positions 152–162 (ATASDVQTENG) are enriched in polar residues. Basic and acidic residues-rich tracts occupy residues 186-211 (QQKD…DKKQ), 218-239 (TEKK…DHVA), 247-275 (SEHK…EIEV), and 298-307 (QFVKKEEPKL). A compositionally biased stretch (polar residues) spans 336–345 (TKMNDATSPL). Positions 363–383 (EMEKSFNEEEFRLNESSDIDR) are enriched in basic and acidic residues. A compositionally biased stretch (basic residues) spans 397–408 (NKNRSSQKRKGG). Basic and acidic residues-rich tracts occupy residues 441-458 (LTKE…QKRV) and 481-490 (HENASYEKSD). Positions 494-507 (LDSQNSEASSQDSG) are enriched in polar residues. The region spanning 528 to 595 (LPMYEFEIPN…DEINHCLQML (68 aa)) is the KH domain. Residues 689 to 747 (PCQNGLLCAAPVGNAWFRAVTVQYFDETDEVFVKFVDYGGYSKMARQDLRQIRTDLMSL) form the Tudor domain.

It localises to the membrane. This Caenorhabditis elegans protein is KH domain-containing protein akap-1.